The following is a 77-amino-acid chain: Omega-conotoxin TxVII (77 aa).

The signal sequence occupies residues 1-22 (MKLTCMMIVAVLFLTAWTFATA). Positions 23 to 49 (DDSGNGLENLFPKAHHEMKNPEASKLN) are excised as a propeptide. 3 disulfide bridges follow: C52-C67, C59-C71, and C66-C75.

Expressed by the venom duct.

Its subcellular location is the secreted. Its function is as follows. Omega-conotoxins act at presynaptic membranes, they bind and block voltage-gated calcium channels (Cav). Specifically acts on L-type channels. It blocks molluscan dihydropyridine-sensitive calcium channels. In Conus textile (Cloth-of-gold cone), this protein is Omega-conotoxin TxVII.